The following is a 243-amino-acid chain: Biosynthetic peptidoglycan transglycosylase (243 aa).

The helical transmembrane segment at 21–43 (LLIVSLVSALMSVLQVIVFRFVD) threads the bilayer.

This sequence belongs to the glycosyltransferase 51 family.

Its subcellular location is the cell inner membrane. The catalysed reaction is [GlcNAc-(1-&gt;4)-Mur2Ac(oyl-L-Ala-gamma-D-Glu-L-Lys-D-Ala-D-Ala)](n)-di-trans,octa-cis-undecaprenyl diphosphate + beta-D-GlcNAc-(1-&gt;4)-Mur2Ac(oyl-L-Ala-gamma-D-Glu-L-Lys-D-Ala-D-Ala)-di-trans,octa-cis-undecaprenyl diphosphate = [GlcNAc-(1-&gt;4)-Mur2Ac(oyl-L-Ala-gamma-D-Glu-L-Lys-D-Ala-D-Ala)](n+1)-di-trans,octa-cis-undecaprenyl diphosphate + di-trans,octa-cis-undecaprenyl diphosphate + H(+). It participates in cell wall biogenesis; peptidoglycan biosynthesis. Its function is as follows. Peptidoglycan polymerase that catalyzes glycan chain elongation from lipid-linked precursors. The chain is Biosynthetic peptidoglycan transglycosylase from Xylella fastidiosa (strain Temecula1 / ATCC 700964).